We begin with the raw amino-acid sequence, 565 residues long: Sulfite reductase [NADPH] hemoprotein beta-component (565 aa).

[4Fe-4S] cluster contacts are provided by Cys-429, Cys-435, Cys-474, and Cys-478. Residue Cys-478 coordinates siroheme.

It belongs to the nitrite and sulfite reductase 4Fe-4S domain family. In terms of assembly, alpha(8)-beta(8). The alpha component is a flavoprotein, the beta component is a hemoprotein. It depends on siroheme as a cofactor. [4Fe-4S] cluster is required as a cofactor.

The enzyme catalyses hydrogen sulfide + 3 NADP(+) + 3 H2O = sulfite + 3 NADPH + 4 H(+). The protein operates within sulfur metabolism; hydrogen sulfide biosynthesis; hydrogen sulfide from sulfite (NADPH route): step 1/1. In terms of biological role, component of the sulfite reductase complex that catalyzes the 6-electron reduction of sulfite to sulfide. This is one of several activities required for the biosynthesis of L-cysteine from sulfate. In Shewanella loihica (strain ATCC BAA-1088 / PV-4), this protein is Sulfite reductase [NADPH] hemoprotein beta-component.